Here is a 626-residue protein sequence, read N- to C-terminus: 4-hydroxy-3-methylbut-2-en-1-yl diphosphate synthase (flavodoxin) (626 aa).

[4Fe-4S] cluster-binding residues include Cys521, Cys524, Cys555, and Glu562.

It belongs to the IspG family. It depends on [4Fe-4S] cluster as a cofactor.

It carries out the reaction (2E)-4-hydroxy-3-methylbut-2-enyl diphosphate + oxidized [flavodoxin] + H2O + 2 H(+) = 2-C-methyl-D-erythritol 2,4-cyclic diphosphate + reduced [flavodoxin]. It functions in the pathway isoprenoid biosynthesis; isopentenyl diphosphate biosynthesis via DXP pathway; isopentenyl diphosphate from 1-deoxy-D-xylulose 5-phosphate: step 5/6. Converts 2C-methyl-D-erythritol 2,4-cyclodiphosphate (ME-2,4cPP) into 1-hydroxy-2-methyl-2-(E)-butenyl 4-diphosphate. This is 4-hydroxy-3-methylbut-2-en-1-yl diphosphate synthase (flavodoxin) from Bacteroides fragilis (strain ATCC 25285 / DSM 2151 / CCUG 4856 / JCM 11019 / LMG 10263 / NCTC 9343 / Onslow / VPI 2553 / EN-2).